Here is a 118-residue protein sequence, read N- to C-terminus: Large ribosomal subunit protein uL18 (118 aa).

It belongs to the universal ribosomal protein uL18 family. As to quaternary structure, part of the 50S ribosomal subunit; part of the 5S rRNA/L5/L18/L25 subcomplex. Contacts the 5S and 23S rRNAs.

This is one of the proteins that bind and probably mediate the attachment of the 5S RNA into the large ribosomal subunit, where it forms part of the central protuberance. This is Large ribosomal subunit protein uL18 from Dechloromonas aromatica (strain RCB).